The following is a 509-amino-acid chain: tRNA-2-methylthio-N(6)-dimethylallyladenosine synthase (509 aa).

Over residues 1–15 (MNEQQRLASQQVNSS) the composition is skewed to polar residues. Positions 1 to 26 (MNEQQRLASQQVNSSTKKEEKDYSKY) are disordered. Residues 16–25 (TKKEEKDYSK) show a composition bias toward basic and acidic residues. The 119-residue stretch at 66–184 (RKFYIRTYGC…LPYILKDAMF (119 aa)) folds into the MTTase N-terminal domain. Positions 75, 111, 145, 221, 225, and 228 each coordinate [4Fe-4S] cluster. A Radical SAM core domain is found at 207 to 437 (RRGDIKAWVN…NALVNKLAIE (231 aa)). The TRAM domain maps to 440 to 503 (DRYKGQIVEV…TWSLNGELVE (64 aa)).

It belongs to the methylthiotransferase family. MiaB subfamily. In terms of assembly, monomer. Requires [4Fe-4S] cluster as cofactor.

Its subcellular location is the cytoplasm. The enzyme catalyses N(6)-dimethylallyladenosine(37) in tRNA + (sulfur carrier)-SH + AH2 + 2 S-adenosyl-L-methionine = 2-methylsulfanyl-N(6)-dimethylallyladenosine(37) in tRNA + (sulfur carrier)-H + 5'-deoxyadenosine + L-methionine + A + S-adenosyl-L-homocysteine + 2 H(+). Catalyzes the methylthiolation of N6-(dimethylallyl)adenosine (i(6)A), leading to the formation of 2-methylthio-N6-(dimethylallyl)adenosine (ms(2)i(6)A) at position 37 in tRNAs that read codons beginning with uridine. The polypeptide is tRNA-2-methylthio-N(6)-dimethylallyladenosine synthase (Bacillus thuringiensis (strain Al Hakam)).